The chain runs to 144 residues: Giant hemoglobin AIII chain (144 aa).

The 143-residue stretch at 2–144 (ECGPLQRLKV…DVITGGIQGN (143 aa)) folds into the Globin domain. H95 is a heme b binding site.

It belongs to the globin family. Giant hemoglobin is composed of four heme-containing chains (AI to AIV), and two linker chains (AV and AVI).

The polypeptide is Giant hemoglobin AIII chain (Lamellibrachia sp. (Deep-sea giant tube worm)).